A 153-amino-acid polypeptide reads, in one-letter code: Pheromone-binding protein Gp-9 (153 aa).

The first 19 residues, 1–19 (MKTFVLHIFIFAFVAFASA), serve as a signal peptide directing secretion. 3 disulfides stabilise this stretch: cysteine 37–cysteine 77, cysteine 73–cysteine 129, and cysteine 118–cysteine 138.

The protein belongs to the PBP/GOBP family. As to quaternary structure, homodimer.

It is found in the secreted. In terms of biological role, colony queen number, a major feature of social organization, is associated with worker genotype for Gp-9. Colonies are headed by either a single reproductive queen (monogyne form) or multiple queens (polygyne form). Differences in worker Gp-9 genotypes between social forms may cause differences in workers' abilities to recognize queens and regulate their numbers. The chain is Pheromone-binding protein Gp-9 from Solenopsis amblychila (Desert fire ant).